Reading from the N-terminus, the 365-residue chain is Histidinol-phosphate aminotransferase (365 aa).

The residue at position 220 (K220) is an N6-(pyridoxal phosphate)lysine.

Belongs to the class-II pyridoxal-phosphate-dependent aminotransferase family. Histidinol-phosphate aminotransferase subfamily. Homodimer. Pyridoxal 5'-phosphate serves as cofactor.

The enzyme catalyses L-histidinol phosphate + 2-oxoglutarate = 3-(imidazol-4-yl)-2-oxopropyl phosphate + L-glutamate. Its pathway is amino-acid biosynthesis; L-histidine biosynthesis; L-histidine from 5-phospho-alpha-D-ribose 1-diphosphate: step 7/9. This Neisseria meningitidis serogroup A / serotype 4A (strain DSM 15465 / Z2491) protein is Histidinol-phosphate aminotransferase.